We begin with the raw amino-acid sequence, 427 residues long: MTTLSPYDNLSPVAQTAYRARAAAADIAPLPRAAKDDALLAIADALEVRTSEIVEANAEDVERAREAGTSEGIIDRLTLTPERIRAIAADVRDVAALPDPVGEVVRGSTLPNGIDLRQVRVPLGVVGIIYEARPNVTVDAAALCLKSGNAVLLRGSSSAYASNTALVRVLRDAVGGSGLPADAVQLVPGESRDSVRELMRARGLVDVLIPRGGASLIRTVVEESTVPVIETGTGNCHVYVDAQTDLAMAVDILINSKAQRPSVCNAAETLLVHKDVADAFLPLALDALADAGVTVHGDEHVLARAEGSKATVVPATTEDWETEYLSYDIAAAVVDSLDAAVAHIRLWSSGHTEAIVTTSQAAARRFTQLVDSTTVAVNASTRFTDGGQFGFGAEIGISTQKLHARGPMGLPELTSTKYIVTGDGHTR.

The protein belongs to the gamma-glutamyl phosphate reductase family.

The protein resides in the cytoplasm. The catalysed reaction is L-glutamate 5-semialdehyde + phosphate + NADP(+) = L-glutamyl 5-phosphate + NADPH + H(+). It functions in the pathway amino-acid biosynthesis; L-proline biosynthesis; L-glutamate 5-semialdehyde from L-glutamate: step 2/2. In terms of biological role, catalyzes the NADPH-dependent reduction of L-glutamate 5-phosphate into L-glutamate 5-semialdehyde and phosphate. The product spontaneously undergoes cyclization to form 1-pyrroline-5-carboxylate. This is Gamma-glutamyl phosphate reductase from Streptomyces griseus subsp. griseus (strain JCM 4626 / CBS 651.72 / NBRC 13350 / KCC S-0626 / ISP 5235).